We begin with the raw amino-acid sequence, 107 residues long: UPF0060 membrane protein RPB_2370 (107 aa).

4 helical membrane passes run 5–25 (IIYV…WGWL), 31–51 (VWWL…LTLV), 61–81 (AAYG…VEGV), and 85–105 (RWDV…LWGP).

This sequence belongs to the UPF0060 family.

It is found in the cell inner membrane. The chain is UPF0060 membrane protein RPB_2370 from Rhodopseudomonas palustris (strain HaA2).